The chain runs to 148 residues: Antitoxin Xre (148 aa).

It belongs to the MbcA/ParS/Xre antitoxin family. As to quaternary structure, homodimer. Forms a complex with cognate toxin Rse.

Functionally, antitoxin component of a type II toxin-antitoxin (TA) system. Neutralizes the activity of cognate toxin Res. The polypeptide is Antitoxin Xre (Yersinia enterocolitica serotype O:8 / biotype 1B (strain NCTC 13174 / 8081)).